The sequence spans 540 residues: PTS system alpha-glucoside-specific EIICB component (540 aa).

One can recognise a PTS EIIC type-1 domain in the interval 1 to 420; it reads MLSQIQRFGG…LNLKTPGREE (420 aa). 11 helical membrane-spanning segments follow: residues 12-32, 87-107, 130-150, 174-194, 201-221, 225-245, 277-297, 307-327, 329-349, 352-372, and 384-404; these read MFTP…AIML, ACLA…AMGM, IAGI…SGLV, FVVI…LLGW, IESL…VYIF, ILIP…GPAV, FALH…ALYF, VAGL…TEPL, FTFL…AATM, VMYI…QFLP, and SMMF…FVVF. Residues 448 to 530 enclose the PTS EIIB type-1 domain; the sequence is LGQAAGFLQA…ENLMKDSLST (83 aa). The active-site Phosphocysteine intermediate; for EIIB activity is the cysteine 470.

The protein resides in the cell membrane. The phosphoenolpyruvate-dependent sugar phosphotransferase system (sugar PTS), a major carbohydrate active -transport system, catalyzes the phosphorylation of incoming sugar substrates concomitantly with their translocation across the cell membrane. This system is involved in alpha-glucoside transport. In terms of biological role, involved in the transport and simultaneous phosphorylation at O-6 of the glucosyl moiety of sucrose and its five linkage-isomeric alpha-D-glucosyl-D-fructoses. Can also transport maltose, isomaltose and maltitol, phosphorylating at O-6 of their non-reducing glucose portion. This Klebsiella pneumoniae protein is PTS system alpha-glucoside-specific EIICB component (aglA).